The primary structure comprises 21 residues: Glutathione S-transferase 1 (21 aa).

Belongs to the GST superfamily. Phi family.

It catalyses the reaction RX + glutathione = an S-substituted glutathione + a halide anion + H(+). Conjugation of reduced glutathione to a wide number of exogenous and endogenous hydrophobic electrophiles. In plants, may have a detoxification role against certain herbicides. The chain is Glutathione S-transferase 1 from Populus euphratica (Euphrates poplar).